We begin with the raw amino-acid sequence, 332 residues long: Glycerol-3-phosphate dehydrogenase [NAD(P)+] (332 aa).

The NADPH site is built by tryptophan 13, lysine 34, and lysine 108. Residues lysine 108, glycine 136, and serine 138 each coordinate sn-glycerol 3-phosphate. NADPH is bound at residue alanine 140. Positions 191, 244, 254, 255, and 256 each coordinate sn-glycerol 3-phosphate. Lysine 191 serves as the catalytic Proton acceptor. Position 255 (arginine 255) interacts with NADPH. The NADPH site is built by valine 279 and glutamate 281.

This sequence belongs to the NAD-dependent glycerol-3-phosphate dehydrogenase family.

It localises to the cytoplasm. The enzyme catalyses sn-glycerol 3-phosphate + NAD(+) = dihydroxyacetone phosphate + NADH + H(+). It catalyses the reaction sn-glycerol 3-phosphate + NADP(+) = dihydroxyacetone phosphate + NADPH + H(+). Its pathway is membrane lipid metabolism; glycerophospholipid metabolism. Catalyzes the reduction of the glycolytic intermediate dihydroxyacetone phosphate (DHAP) to sn-glycerol 3-phosphate (G3P), the key precursor for phospholipid synthesis. This chain is Glycerol-3-phosphate dehydrogenase [NAD(P)+], found in Francisella tularensis subsp. holarctica (strain FTNF002-00 / FTA).